A 407-amino-acid polypeptide reads, in one-letter code: MKYDHLLVRYGELTLKGSNRKKFVNQLRNNVNKSLKGLDGFVVKGKRDRMYIELEDHADINEITYRLSKIFGIKSISPVLKVEKTIEAMSAAAIKFAQQFEENSTFKIDVKRADKNFPMDTYELQRELGGTVLKQIENVSVNVKRADHEIRVEVRLDAIYMYEEVVPGSGGLPVGTGGKTLLMLSGGIDSPVAGMEVMRRGVTIEAIHFHSPPFTSDQAKEKVIELTRILAERVGPIKLHIVPFTELQKQVNKVVHPRYTMTSTRRMMMRVADKLVHQIGALAIVNGENLGQVASQTLHSMYAINNVTSTPVLRPLLTYDKEEIIIKSKEIGTFETSIQPFEDCCTIFTPKNPVTEPNFEKVVQYESVFDFEEMINRAVENIETLEITSDYKTIKEQQTNQLINDFL.

The 105-residue stretch at 61–165 (NEITYRLSKI…LDAIYMYEEV (105 aa)) folds into the THUMP domain. ATP contacts are provided by residues 183–184 (ML), 208–209 (HF), Arg-265, Gly-287, and Gln-296.

The protein belongs to the ThiI family.

It localises to the cytoplasm. The catalysed reaction is [ThiI sulfur-carrier protein]-S-sulfanyl-L-cysteine + a uridine in tRNA + 2 reduced [2Fe-2S]-[ferredoxin] + ATP + H(+) = [ThiI sulfur-carrier protein]-L-cysteine + a 4-thiouridine in tRNA + 2 oxidized [2Fe-2S]-[ferredoxin] + AMP + diphosphate. The enzyme catalyses [ThiS sulfur-carrier protein]-C-terminal Gly-Gly-AMP + S-sulfanyl-L-cysteinyl-[cysteine desulfurase] + AH2 = [ThiS sulfur-carrier protein]-C-terminal-Gly-aminoethanethioate + L-cysteinyl-[cysteine desulfurase] + A + AMP + 2 H(+). Its pathway is cofactor biosynthesis; thiamine diphosphate biosynthesis. Functionally, catalyzes the ATP-dependent transfer of a sulfur to tRNA to produce 4-thiouridine in position 8 of tRNAs, which functions as a near-UV photosensor. Also catalyzes the transfer of sulfur to the sulfur carrier protein ThiS, forming ThiS-thiocarboxylate. This is a step in the synthesis of thiazole, in the thiamine biosynthesis pathway. The sulfur is donated as persulfide by IscS. This chain is Probable tRNA sulfurtransferase, found in Staphylococcus aureus (strain N315).